A 382-amino-acid polypeptide reads, in one-letter code: Anhydro-N-acetylmuramic acid kinase (382 aa).

22 to 29 contributes to the ATP binding site; it reads GTSMDGVD.

This sequence belongs to the anhydro-N-acetylmuramic acid kinase family.

The enzyme catalyses 1,6-anhydro-N-acetyl-beta-muramate + ATP + H2O = N-acetyl-D-muramate 6-phosphate + ADP + H(+). Its pathway is amino-sugar metabolism; 1,6-anhydro-N-acetylmuramate degradation. The protein operates within cell wall biogenesis; peptidoglycan recycling. Functionally, catalyzes the specific phosphorylation of 1,6-anhydro-N-acetylmuramic acid (anhMurNAc) with the simultaneous cleavage of the 1,6-anhydro ring, generating MurNAc-6-P. Is required for the utilization of anhMurNAc either imported from the medium or derived from its own cell wall murein, and thus plays a role in cell wall recycling. This chain is Anhydro-N-acetylmuramic acid kinase, found in Burkholderia ambifaria (strain ATCC BAA-244 / DSM 16087 / CCUG 44356 / LMG 19182 / AMMD) (Burkholderia cepacia (strain AMMD)).